The sequence spans 318 residues: CRISPR-associated endonuclease Cas1 1 (318 aa).

Positions 157, 222, and 237 each coordinate Mn(2+).

Belongs to the CRISPR-associated endonuclease Cas1 family. As to quaternary structure, homodimer, forms a heterotetramer with a Cas2 homodimer. The cofactor is Mg(2+). Mn(2+) is required as a cofactor.

Its function is as follows. CRISPR (clustered regularly interspaced short palindromic repeat), is an adaptive immune system that provides protection against mobile genetic elements (viruses, transposable elements and conjugative plasmids). CRISPR clusters contain spacers, sequences complementary to antecedent mobile elements, and target invading nucleic acids. CRISPR clusters are transcribed and processed into CRISPR RNA (crRNA). Acts as a dsDNA endonuclease. Involved in the integration of spacer DNA into the CRISPR cassette. The protein is CRISPR-associated endonuclease Cas1 1 of Francisella tularensis subsp. novicida (strain U112).